Here is a 418-residue protein sequence, read N- to C-terminus: Tyrosine--tRNA ligase (418 aa).

Position 34 (Y34) interacts with L-tyrosine. Positions 39-48 (PTADSLHLGH) match the 'HIGH' region motif. The L-tyrosine site is built by Y169 and Q173. Residues 229-233 (KFGKS) carry the 'KMSKS' region motif. ATP is bound at residue K232. An S4 RNA-binding domain is found at 352–418 (LNIVDMLVTA…GKKKYAVLTY (67 aa)).

This sequence belongs to the class-I aminoacyl-tRNA synthetase family. TyrS type 1 subfamily. In terms of assembly, homodimer.

The protein resides in the cytoplasm. The enzyme catalyses tRNA(Tyr) + L-tyrosine + ATP = L-tyrosyl-tRNA(Tyr) + AMP + diphosphate + H(+). Functionally, catalyzes the attachment of tyrosine to tRNA(Tyr) in a two-step reaction: tyrosine is first activated by ATP to form Tyr-AMP and then transferred to the acceptor end of tRNA(Tyr). This is Tyrosine--tRNA ligase from Streptococcus equi subsp. zooepidemicus (strain MGCS10565).